Consider the following 182-residue polypeptide: tRNA-splicing endonuclease (182 aa).

Residues Tyr119, His127, and Lys158 contribute to the active site.

It belongs to the tRNA-intron endonuclease family. Archaeal short subfamily. As to quaternary structure, homotetramer; although the tetramer contains four active sites, only two participate in the cleavage. Therefore, it should be considered as a dimer of dimers.

The catalysed reaction is pretRNA = a 3'-half-tRNA molecule with a 5'-OH end + a 5'-half-tRNA molecule with a 2',3'-cyclic phosphate end + an intron with a 2',3'-cyclic phosphate and a 5'-hydroxyl terminus.. Its function is as follows. Endonuclease that removes tRNA introns. Cleaves pre-tRNA at the 5'- and 3'-splice sites to release the intron. The products are an intron and two tRNA half-molecules bearing 2',3' cyclic phosphate and 5'-OH termini. Recognizes a pseudosymmetric substrate in which 2 bulged loops of 3 bases are separated by a stem of 4 bp. This is tRNA-splicing endonuclease from Saccharolobus islandicus (strain M.14.25 / Kamchatka #1) (Sulfolobus islandicus).